A 472-amino-acid polypeptide reads, in one-letter code: Cell division protein FtsP (472 aa).

A signal peptide (tat-type signal) is located at residues 1-27 (MSLSRRQFIQASGIALCAGAMPLTARA).

This sequence belongs to the FtsP family. Post-translationally, predicted to be exported by the Tat system. The position of the signal peptide cleavage has not been experimentally proven.

It localises to the periplasm. Its function is as follows. Cell division protein that is required for growth during stress conditions. May be involved in protecting or stabilizing the divisomal assembly under conditions of stress. In Dickeya dadantii (strain 3937) (Erwinia chrysanthemi (strain 3937)), this protein is Cell division protein FtsP.